Consider the following 195-residue polypeptide: MSNIKLIVGLANPGAEYAQTRHNAGAWYVHELARVCNVTLVPESKYYGLAARATLHGRDVRLLIPATFMNLSGKSVAALANFFRILPEEILVAHDELDIEPGVAKFKLGGGHGGHNGLKDIIAQMGNDKGFHRLRIGIGHPGDKNKVSGYVLGKAPASEQEKMDAAIDEAVRATEILFKQDMVKAMNRLHSFKAE.

Tyrosine 17 serves as a coordination point for tRNA. The active-site Proton acceptor is histidine 22. Residues phenylalanine 68, asparagine 70, and asparagine 116 each coordinate tRNA.

The protein belongs to the PTH family. As to quaternary structure, monomer.

Its subcellular location is the cytoplasm. The enzyme catalyses an N-acyl-L-alpha-aminoacyl-tRNA + H2O = an N-acyl-L-amino acid + a tRNA + H(+). Functionally, hydrolyzes ribosome-free peptidyl-tRNAs (with 1 or more amino acids incorporated), which drop off the ribosome during protein synthesis, or as a result of ribosome stalling. Its function is as follows. Catalyzes the release of premature peptidyl moieties from peptidyl-tRNA molecules trapped in stalled 50S ribosomal subunits, and thus maintains levels of free tRNAs and 50S ribosomes. The chain is Peptidyl-tRNA hydrolase from Shewanella denitrificans (strain OS217 / ATCC BAA-1090 / DSM 15013).